Here is a 484-residue protein sequence, read N- to C-terminus: TPR repeat-containing protein YvcD (484 aa).

TPR repeat units lie at residues 21–54 (GQYF…EPED), 55–88 (SEML…LEAE), and 187–220 (WSAY…NEGN).

This chain is TPR repeat-containing protein YvcD (yvcD), found in Bacillus subtilis (strain 168).